A 179-amino-acid polypeptide reads, in one-letter code: Prion-like protein doppel (179 aa).

A signal peptide spans 1 to 25 (MKNRLGTWWVAILCMLLASHLSTVK). Residues 27 to 50 (RGIKHRFKWNRKVLPSSGGQITEA) are flexible tail. Residues 51–155 (RVAENRPGAF…KHCDFWLERG (105 aa)) form a globular region. 2 disulfide bridges follow: Cys-95–Cys-148 and Cys-109–Cys-143. Residues Asn-99 and Asn-111 are each glycosylated (N-linked (GlcNAc...) asparagine). Residues 125 to 142 (KQDSKLHQRVLWRLIKEI) form a cu(2+) binding region. Gly-155 carries the GPI-anchor amidated glycine lipid modification. A propeptide spans 156 to 179 (AALRVAVDQPAMVCLLGFVWFIVK) (removed in mature form).

Belongs to the prion family. Post-translationally, N-glycosylated. N-glycosylated at two distinct sites. O-glycosylated. As to expression, detected in testis. Detected within seminiferous tubules, on round and elongated spermatids (at protein level). Not detected in brain (at protein level). Detected in testis, and at low levels in heart. Expression in brain is very low and barely detectable.

It is found in the cell membrane. Functionally, required for normal acrosome reaction and for normal male fertility. Can bind Cu(2+). The sequence is that of Prion-like protein doppel (Prnd) from Mus musculus (Mouse).